The following is a 388-amino-acid chain: Tryptophan synthase beta chain 1 (388 aa).

The residue at position 82 (K82) is an N6-(pyridoxal phosphate)lysine.

It belongs to the TrpB family. Tetramer of two alpha and two beta chains. Pyridoxal 5'-phosphate is required as a cofactor.

It carries out the reaction (1S,2R)-1-C-(indol-3-yl)glycerol 3-phosphate + L-serine = D-glyceraldehyde 3-phosphate + L-tryptophan + H2O. Its pathway is amino-acid biosynthesis; L-tryptophan biosynthesis; L-tryptophan from chorismate: step 5/5. Functionally, the beta subunit is responsible for the synthesis of L-tryptophan from indole and L-serine. This chain is Tryptophan synthase beta chain 1 (trpB1), found in Pyrococcus abyssi (strain GE5 / Orsay).